The primary structure comprises 127 residues: Glycine cleavage system H protein (127 aa).

The Lipoyl-binding domain maps to 24-106 (TVTVGITDHA…FEGAWIAKIK (83 aa)). Lysine 65 bears the N6-lipoyllysine mark.

Belongs to the GcvH family. The glycine cleavage system is composed of four proteins: P, T, L and H. (R)-lipoate is required as a cofactor.

In terms of biological role, the glycine cleavage system catalyzes the degradation of glycine. The H protein shuttles the methylamine group of glycine from the P protein to the T protein. This is Glycine cleavage system H protein from Marinomonas sp. (strain MWYL1).